Here is an 817-residue protein sequence, read N- to C-terminus: MNSIPVLTLLGVTALLPCVPALTCQKSSAQAVRNVAELPLRWWGAGEKTCEVSEGCQDLIMLLYNGPKVNLVIIKGCTEVEDQEPKVIWLRTGPGLSVVSYTRVCRHGDLCNDVNSTKILEELPTPTVPGSLRCPLCLSNDSCENAPEQVCPVGSTHCYDGVLRLRGDGIRTNLKVQGCMAQPDCNLLNGTQAIGTLYMSENCDLIGPQALDCNSGSLETVRNVSDLHLSWTTGWQTCEAGEGCYETVMLIQNGHEFHMVLTKGCTRDMNKKARLTRHRTGPGISIVSYVHVCRDRDFCNDLSTTDPLWTPPPDTELGTLRCRHCLSTGSCVSASELVCPAGSTHCYSGVLSLRGGGVISDLKVQGCISQSQPGCNLLNGTQTIGPVDVREDCGLQLDALKCQHGTLKTIQDISKLPLQWTAGQKICNVGEGCQDTLMLIENGEQVNLVLTKGCTTAKDQEAKVTEHRTGPGLSVTSYTRVCRKKDFCNDLSTTAPLWAPPPVTAPGTTRCPLCFSEQACENAPEQVCPAGSTHCYSGVLSLRGGGIISDLKVQGCMSQPGCNLLNGTQTIGPVDVSERCSPPSETTELSCYRGVMFELGNGFAEEPVKWTAPGSQVCAPDEICQETLLLIDVGQKSAFLGSKGCSSPGAQDNIGVSIFSRLPGMLVASYTKFCSSHLCNGADSSSVLLSILPRPDVPPPGDVQCPMCVELFGSCKSTDSVTCPRGATHCYKGDIALQGGGLTTRVSIQGCMAPPIKPLLGDSKTIGIFSAEESSNYRHEDDVTSAPSLAWTLRLSAWMLGLSALLSSLYAGICPLC.

The signal sequence occupies residues M1 to A21. Residues L22 to S796 lie on the Extracellular side of the membrane. 4 N-linked (GlcNAc...) asparagine glycosylation sites follow: N115, N189, N379, and N566. 4 consecutive UPAR/Ly6 domains span residues C134 to C203, C322 to C393, C511 to S581, and C705 to S774. The helical; Anchor for type IV membrane protein transmembrane segment at A797–C817 threads the bilayer.

As to quaternary structure, found in a complex with integrin ITGAM/CD11b and ITGB2/CD18. Interacts with PECAM1 (via Ig-like C2-type domain 6); the interaction is Ca(2+)-dependent; the interaction is direct. Interacts with serine protease PRTN3/myeloblastin; the interaction tethers PRTN3 to the cell surface; the interaction is direct. In terms of tissue distribution, expressed in neutrophils.

The protein resides in the cell membrane. In terms of biological role, in association with beta-2 integrin heterodimer ITGAM/CD11b and ITGB2/CD18, mediates activation of TNF-alpha primed neutrophils including degranulation and superoxide production. In addition, by preventing beta-2 integrin internalization and attenuating chemokine signaling favors adhesion over migration. Heterophilic interaction with PECAM1 on endothelial cells plays a role in neutrophil transendothelial migration in vitro. However, appears to be dispensable for neutrophil recruitment caused by bacterial infection in vivo. Acts as a receptor for the mature form of protease PRTN3 allowing its display at the cell surface of neutrophils. By displaying PRTN3 at the neutrophil cell surface, may play a role in enhancing endothelial cell junctional integrity and thus vascular integrity during neutrophil diapedesis. In Mus musculus (Mouse), this protein is CD177 antigen (Cd177).